The sequence spans 708 residues: Leukotoxin translocation ATP-binding protein LktB (708 aa).

One can recognise a Peptidase C39 domain in the interval M1 to V126. Residues F155–Q437 form the ABC transmembrane type-1 domain. The next 5 membrane-spanning stretches (helical) occupy residues L159–V179, L192–L212, A270–Y290, L296–L316, and V389–G409. In terms of domain architecture, ABC transporter spans I469–Q704. G503–S510 contacts ATP.

This sequence belongs to the ABC transporter superfamily. Protein-1 exporter (TC 3.A.1.109) family. In terms of assembly, homodimer.

The protein localises to the cell inner membrane. It carries out the reaction ATP + H2O + proteinSide 1 = ADP + phosphate + proteinSide 2.. Functionally, part of the ABC transporter complex LktBD involved in leukotoxin export. Transmembrane domains (TMD) form a pore in the inner membrane and the ATP-binding domain (NBD) is responsible for energy generation. The sequence is that of Leukotoxin translocation ATP-binding protein LktB (lktB) from Pasteurella haemolytica-like sp. (strain 5943B).